The chain runs to 509 residues: MGIQAAEISAILKEQIKNFGQDAQVAEVGRVLSVGDGIARVHGLDNVQAGEMVEFPGGIRGMALNLEVDNVGIVIFGSDRDIKEGDTVKRTNAIVDVPAGEGLLGRVVDGLGNPIDGKGPIVAKERRIADVKAPGIIPRKSVHEPMATGLKSVDAMIPIGRGQRELIIGDRQTGKTAIALDTILNQKSYNDANPGNKLHCFYVAIGQKRSTVAQLVKKLEEAGAMEYTTVVAATASDPAPMQFLAPYSATAMAEYFRDNGMHALIIYDDLSKQAVAYRQMSLLLRRPPGREAYPGDVFYLHSRLLERSAKLNEDFGSGSLTALPVIETQGGDVSAFIPTNVISITDGQIFLETELFYQGIRPAVNTGLSVSRVGSSAQTNSMKSVAGPVKLELAQYREMAAFAQFGSDLDAATQKLLNRGARLTELMKQPQYSPLTNAEIVAVIFAGTNGFLDAVPVKEVGRFEKGLLAYLRSTRKDVLEWLTKEDPKIKGDAEKKLKDAIAEFAKTFA.

ATP is bound at residue 169–176 (GDRQTGKT).

Belongs to the ATPase alpha/beta chains family. In terms of assembly, F-type ATPases have 2 components, CF(1) - the catalytic core - and CF(0) - the membrane proton channel. CF(1) has five subunits: alpha(3), beta(3), gamma(1), delta(1), epsilon(1). CF(0) has four main subunits: a(1), b(1), b'(1) and c(9-12).

Its subcellular location is the cellular chromatophore membrane. It catalyses the reaction ATP + H2O + 4 H(+)(in) = ADP + phosphate + 5 H(+)(out). Its function is as follows. Produces ATP from ADP in the presence of a proton gradient across the membrane. The alpha chain is a regulatory subunit. The protein is ATP synthase subunit alpha of Rhodobacter capsulatus (Rhodopseudomonas capsulata).